The chain runs to 192 residues: NF-kappa-B inhibitor-interacting Ras-like protein 1 (192 aa).

11 to 18 (GLLSVGKT) contributes to the GTP binding site. The short motif at 35–43 (DCETLEDVY) is the Effector region element. The interactions with NFKBIA and NFKBIB stretch occupies residues 58-93 (HLYDTRGLQKGVELPKHYFSFADGFVLVYSVNNLES). Residues 61–65 (DTRGL) and 120–123 (NKLD) contribute to the GTP site. Positions 168 to 192 (LSQPQSKSSFPLPGRKNKGNSNPEN) are disordered.

This sequence belongs to the small GTPase superfamily. Ras family. KappaB-Ras subfamily. In terms of assembly, interacts with both NF-kappa-B inhibitor alpha (NFKBIA) and beta (NFKBIB) in vitro. However, it probably only interacts with NFKBIB in vivo. Forms a complex with NFKBIB and NF-kappa-B heterodimer (p50/NFKB1 and p65/RELA). Also interacts with c-Rel (REL).

Its subcellular location is the cytoplasm. Functionally, atypical Ras-like protein that acts as a potent regulator of NF-kappa-B activity by preventing the degradation of NF-kappa-B inhibitor beta (NFKBIB) by most signals, explaining why NFKBIB is more resistant to degradation. May act by blocking phosphorylation of NFKBIB and mediating cytoplasmic retention of p65/RELA NF-kappa-B subunit. It is unclear whether it acts as a GTPase. Both GTP- and GDP-bound forms block phosphorylation of NFKBIB. The sequence is that of NF-kappa-B inhibitor-interacting Ras-like protein 1 (Nkiras1) from Mus musculus (Mouse).